A 77-amino-acid polypeptide reads, in one-letter code: U8-lycotoxin-Ls1i (77 aa).

Residues Met-1–Val-20 form the signal peptide. The propeptide occupies Gln-21 to Arg-26.

Belongs to the neurotoxin 19 (CSTX) family. 08 (U8-Lctx) subfamily. In terms of processing, contains 4 disulfide bonds. Expressed by the venom gland.

It localises to the secreted. The protein is U8-lycotoxin-Ls1i of Lycosa singoriensis (Wolf spider).